The primary structure comprises 102 residues: Small ribosomal subunit protein uS10 (102 aa).

This sequence belongs to the universal ribosomal protein uS10 family. As to quaternary structure, part of the 30S ribosomal subunit.

In terms of biological role, involved in the binding of tRNA to the ribosomes. This Citrifermentans bemidjiense (strain ATCC BAA-1014 / DSM 16622 / JCM 12645 / Bem) (Geobacter bemidjiensis) protein is Small ribosomal subunit protein uS10.